Here is a 453-residue protein sequence, read N- to C-terminus: Jacalin-related lectin 40 (453 aa).

Jacalin-type lectin domains follow at residues 1–142 (MAQK…YFTT), 154–296 (HIKL…YFSS), and 306–449 (PEKL…YVVP). At Ala-2 the chain carries N-acetylalanine.

This sequence belongs to the jacalin lectin family. As to expression, expressed in roots.

This Arabidopsis thaliana (Mouse-ear cress) protein is Jacalin-related lectin 40 (JAL40).